A 130-amino-acid chain; its full sequence is Small ribosomal subunit protein uS11c (130 aa).

It belongs to the universal ribosomal protein uS11 family. In terms of assembly, part of the 30S ribosomal subunit.

It is found in the plastid. It localises to the chloroplast. The polypeptide is Small ribosomal subunit protein uS11c (Pinus koraiensis (Korean pine)).